We begin with the raw amino-acid sequence, 599 residues long: Elongation factor 4 (599 aa).

The 183-residue stretch at 4–186 folds into the tr-type G domain; the sequence is EHIRNFSIIA…EIVKKIPPPK (183 aa). GTP-binding positions include 16–21 and 133–136; these read DHGKST and NKID.

This sequence belongs to the TRAFAC class translation factor GTPase superfamily. Classic translation factor GTPase family. LepA subfamily.

Its subcellular location is the cell inner membrane. The enzyme catalyses GTP + H2O = GDP + phosphate + H(+). Required for accurate and efficient protein synthesis under certain stress conditions. May act as a fidelity factor of the translation reaction, by catalyzing a one-codon backward translocation of tRNAs on improperly translocated ribosomes. Back-translocation proceeds from a post-translocation (POST) complex to a pre-translocation (PRE) complex, thus giving elongation factor G a second chance to translocate the tRNAs correctly. Binds to ribosomes in a GTP-dependent manner. This chain is Elongation factor 4, found in Citrifermentans bemidjiense (strain ATCC BAA-1014 / DSM 16622 / JCM 12645 / Bem) (Geobacter bemidjiensis).